The chain runs to 101 residues: Small ubiquitin-related modifier 5 (101 aa).

Residues 17–21 (IKDED) carry the Required for PML-NB formation motif. Lys-18 is covalently cross-linked (Glycyl lysine isopeptide (Lys-Gly) (interchain with G-Cter in SUMO1P1/SUMO5)). The Ubiquitin-like domain occupies 20–97 (EDIKLRVIGQ…IEVYQEQIGG (78 aa)). Residue Gly-97 forms a Glycyl lysine isopeptide (Gly-Lys) (interchain with K-? in acceptor proteins) linkage. Positions 98–101 (HSTV) are excised as a propeptide.

Belongs to the ubiquitin family. SUMO subfamily. Interacts with CBX4. Interacts with PIAS1. Found in a complex with SAE2. Interacts with UBE2I. Interacts with SP100. Interacts with HIPK2. Interacts with DAXX. Interacts with PML-RARA oncoprotein; PML-RARalpha outcompetes PML for SUMO1P1/SUMO5 conjugation. In terms of processing, cleavage of precursor form is necessary for function. Post-translationally, autosumoylated at Lys-18. High expression levels in testes and peripheral blood leukocyte. Expressed also in lung, placenta, liver, spleen and thymus.

The protein resides in the nucleus. Ubiquitin-like protein that can be covalently attached to proteins as a monomer or as a lysine-linked polymer. Regulates the life cycle of promyelocytic leukemia nuclear bodies (PML-NBs). PolySUMO1P1/SUMO5 conjugation on 'Lys-160' of PML facilitates recruitment of PML-NB components, which enlarges PML-NB. SUMO1P1/SUMO5 also increases polySUMO2/3 conjugation of PML, resulting in RNF4-mediated disruption of PML-NBs. This chain is Small ubiquitin-related modifier 5, found in Homo sapiens (Human).